Reading from the N-terminus, the 613-residue chain is Transcription factor MTB1 (613 aa).

Residues 48–130 (LQNKLSDLVE…RVLQKLHMLF (83 aa)) are JAZ-interaction domain. Disordered stretches follow at residues 256–285 (EKNEGNNPRLSNSGAVTERTDGNPKIFGHD) and 391–441 (AHNV…AERQ). A compositionally biased stretch (polar residues) spans 260-270 (GNNPRLSNSGA). Composition is skewed to basic and acidic residues over residues 394–417 (VESEHSDVEASCKEDRAGPVDEKR) and 427–441 (NGREEPLNHVEAERQ). The tract at residues 430–443 (EEPLNHVEAERQRR) is basic motif; degenerate. Residues 430 to 479 (EEPLNHVEAERQRREKLNQRFYALRAVVPNISKMDKASLLGDAIAYITEL) enclose the bHLH domain. Residues 444 to 479 (EKLNQRFYALRAVVPNISKMDKASLLGDAIAYITEL) are helix-loop-helix motif. Positions 490–513 (RELRLGSTSRDAITSEDSPSSEIQ) are disordered. Residues 495-512 (GSTSRDAITSEDSPSSEI) show a composition bias toward polar residues.

As to quaternary structure, interacts with MYC2 (via N-terminus). MTB1 competes with MED25 for binding to MYC2. Interacts (via N-terminus) with JAZ7.

It is found in the nucleus. Its function is as follows. Transcription factor that negatively regulates jasmonate (JA) signaling. Negatively regulates JA-dependent response to wounding, JA-induced expression of defense genes, JA-dependent responses against herbivorous insects, and JA-dependent resistance against Botrytis cinerea infection. Plays a positive role in resistance against the bacterial pathogen Pseudomonas syringae pv tomato DC3000. The polypeptide is Transcription factor MTB1 (Solanum lycopersicum (Tomato)).